The sequence spans 129 residues: uncharacterized protein (129 aa).

3 helical membrane-spanning segments follow: residues leucine 22–phenylalanine 42, valine 55–phenylalanine 75, and leucine 88–phenylalanine 108.

It is found in the membrane. This is an uncharacterized protein from Saccharomyces cerevisiae (strain ATCC 204508 / S288c) (Baker's yeast).